Here is a 509-residue protein sequence, read N- to C-terminus: ATP synthase subunit beta, mitochondrial (509 aa).

Residues 1–32 (MVLPRLIPRLSRSAFKVAQANNRVFNAPFRGM) constitute a mitochondrion transit peptide. 189–196 (GAGVGKTV) is an ATP binding site.

In terms of assembly, F-type ATP synthases have 2 components, the catalytic core F(1) and the membrane-embedded component F(0), linked together by a central stalk and a peripheral stalk. The central stalk, also called rotor shaft, is often seen as part of F(1). The peripheral stalk is seen as part of F(0). F(0) contains the membrane channel next to the rotor. F-type ATP synthases form dimers but each monomer functions independently in ATP generation. The dimer consists of 17 different polypeptides: ATP1 (subunit alpha, 3 molecules per monomer, part of F(1)), ATP2 (subunit beta, 3 copies per monomer, part of F(1)), ATP3 (subunit gamma, part of the central stalk), ATP4 (subunit b, part of the peripheral stalk), ATP5/OSCP (subunit 5/OSCP, part of the peripheral stalk), ATP6 (subunit a, part of the peripheral stalk), ATP7 (subunit d, part of the peripheral stalk), ATP8 (subunit 8, part of the peripheral stalk), OLI1 (subunit c, part of the rotor, 10 molecules per monomer), ATP14 (subunit h, part of the peripheral stalk), ATP15 (subunit epsilon, part of the central stalk), ATP16 (subunit delta, part of the central stalk), ATP17 (subunit f, part of the peripheral stalk), ATP18 (subunit i/j, part of the peripheral stalk), ATP19 (subunit k, dimer-specific, at interface between monomers), ATP20 (subunit g, at interface between monomers), TIM11 (subunit e, at interface between monomers).

The protein localises to the mitochondrion inner membrane. The enzyme catalyses ATP + H2O + 4 H(+)(in) = ADP + phosphate + 5 H(+)(out). In terms of biological role, mitochondrial membrane ATP synthase (F(1)F(0) ATP synthase or Complex V) produces ATP from ADP in the presence of a proton gradient across the membrane which is generated by electron transport complexes of the respiratory chain. F-type ATP synthases consist of two structural domains, F(1) - containing the extramembraneous catalytic core, and F(0) - containing the membrane proton channel, linked together by a central stalk and a peripheral stalk. During catalysis, ATP synthesis in the catalytic domain of F(1) is coupled via a rotary mechanism of the central stalk subunits to proton translocation. Subunits alpha/ATP1 and beta/ATP2 form the catalytic core in F(1). Rotation of the central stalk against the surrounding alpha/ATP1(3)beta/ATP2(3) subunits leads to hydrolysis of ATP in three separate catalytic sites on the beta/ATP2 subunits. The sequence is that of ATP synthase subunit beta, mitochondrial from Yarrowia lipolytica (strain CLIB 122 / E 150) (Yeast).